Consider the following 682-residue polypeptide: Homeobox-leucine zipper protein HDG7 (682 aa).

Positions 33–65 (LSDDSFDAMSGDEDKQEQRPKKKKRKTKYHRHT) are disordered. Residues 52–65 (PKKKKRKTKYHRHT) are compositionally biased toward basic residues. The segment at residues 57–116 (RKTKYHRHTSYQIQELESFFKECPHPNEKQRLELGKKLTLESKQIKFWFQNRRTQMKTQL) is a DNA-binding region (homeobox). A coiled-coil region spans residues 105–186 (FQNRRTQMKT…LDRICALANR (82 aa)). Residues 214 to 429 (SGGTSLMFMD…LQRQCESFTM (216 aa)) form the START domain.

The protein belongs to the HD-ZIP homeobox family. Class IV subfamily. As to quaternary structure, interacts with AIL7/PLT7. As to expression, expressed in cells around the base of leaf primordia, in the outermost 2 to 3 cell layers along the boundary between two leaf primordia. Expressed in lateral root primordia and tips, and in the epidermal boundaries of two cotyledons at heart-stage embryo.

The protein resides in the nucleus. In terms of biological role, probable transcription factor that binds to the DNA sequence 5'-GCATTAAATGC-3'. Seems to promote cell differentiation. The protein is Homeobox-leucine zipper protein HDG7 of Arabidopsis thaliana (Mouse-ear cress).